The following is a 127-amino-acid chain: Protein chibby homolog 1 (127 aa).

The tract at residues 1 to 25 is disordered; that stretch reads MPLFGSIFSPKKTPPRKSASLSNLH. A phosphoserine mark is found at Ser9 and Ser20. Residues 60–112 form a minimal region for the interaction with PKD2 region; it reads VADSVISGGVDRRETQRLRKRNQQLEEENNLLRLKVDILLDMLSETTAESHLK. Positions 68–110 form a coiled coil; the sequence is GVDRRETQRLRKRNQQLEEENNLLRLKVDILLDMLSETTAESH. The segment at 77 to 98 is leucine-zipper; mediates homodimerization; the sequence is LRKRNQQLEEENNLLRLKVDIL.

Belongs to the chibby family. Homodimer. Homodimerization is essential for nuclear localization and interaction with KPNA4 but is dispensable for interaction with CTNNB1. Interacts with polycystin-2/PKD2 and GM130. Interacts with the C-terminal region of CTNNB1. Interacts (C-terminus) with TCIM (C-terminus), TCIM competes with CTNNB1 for the interaction with CBY1. Interacts with FAM92A; this interaction facilitates targeting of FAM92A to cilium basal body. Interacts with CIBAR2. Interacts with KPNA4. In terms of tissue distribution, found in heart, brain, lung, liver, muscle, kidney and testis. Levels are approximately 3-fold higher in embryonic and adult heart than in lung or liver.

The protein localises to the nucleus speckle. Its subcellular location is the cytoplasm. It localises to the cytoskeleton. It is found in the cilium basal body. The protein resides in the microtubule organizing center. The protein localises to the centrosome. Its subcellular location is the centriole. It localises to the golgi apparatus. It is found in the trans-Golgi network. The protein resides in the cell projection. The protein localises to the cilium. Its subcellular location is the flagellum. It localises to the nucleus. Inhibits the Wnt/Wingless pathway by binding to CTNNB1/beta-catenin and inhibiting beta-catenin-mediated transcriptional activation through competition with TCF/LEF transcription factors. Has also been shown to play a role in regulating the intracellular trafficking of polycystin-2/PKD2 and possibly of other intracellular proteins. Promotes adipocyte and cardiomyocyte differentiation. This chain is Protein chibby homolog 1 (Cby1), found in Mus musculus (Mouse).